Reading from the N-terminus, the 138-residue chain is Cysteine desulfuration protein SufE (138 aa).

Cysteine 51 acts as the Cysteine persulfide intermediate in catalysis.

This sequence belongs to the SufE family. In terms of assembly, homodimer. Interacts with SufS.

The protein resides in the cytoplasm. It functions in the pathway cofactor biosynthesis; iron-sulfur cluster biosynthesis. In terms of biological role, participates in cysteine desulfuration mediated by SufS. Cysteine desulfuration mobilizes sulfur from L-cysteine to yield L-alanine and constitutes an essential step in sulfur metabolism for biosynthesis of a variety of sulfur-containing biomolecules. Functions as a sulfur acceptor for SufS, by mediating the direct transfer of the sulfur atom from the S-sulfanylcysteine of SufS, an intermediate product of cysteine desulfuration process. The protein is Cysteine desulfuration protein SufE of Klebsiella pneumoniae (strain 342).